A 478-amino-acid chain; its full sequence is Glucose-6-phosphate 1-dehydrogenase (478 aa).

NADP(+) is bound by residues arginine 48, 86–87, and lysine 142; that span reads DF. 4 residues coordinate substrate: histidine 172, lysine 176, glutamate 210, and aspartate 229. The Proton acceptor role is filled by histidine 234. 2 residues coordinate substrate: lysine 334 and lysine 339.

It belongs to the glucose-6-phosphate dehydrogenase family.

It carries out the reaction D-glucose 6-phosphate + NADP(+) = 6-phospho-D-glucono-1,5-lactone + NADPH + H(+). The protein operates within carbohydrate degradation; pentose phosphate pathway; D-ribulose 5-phosphate from D-glucose 6-phosphate (oxidative stage): step 1/3. Functionally, catalyzes the oxidation of glucose 6-phosphate to 6-phosphogluconolactone. The chain is Glucose-6-phosphate 1-dehydrogenase from Borreliella burgdorferi (strain ATCC 35210 / DSM 4680 / CIP 102532 / B31) (Borrelia burgdorferi).